A 320-amino-acid chain; its full sequence is Copper chaperone for superoxide dismutase, chloroplastic/cytosolic (320 aa).

The N-terminal 67 residues, 1–67 (MASILRSVAT…LSRSFVSSPM (67 aa)), are a transit peptide targeting the chloroplast. The HMA domain occupies 86–149 (QLLTEFMVDM…ALEQTGRKAR (64 aa)). Residues C97, C100, C300, and C302 each contribute to the Cu cation site.

The protein in the C-terminal section; belongs to the Cu-Zn superoxide dismutase family. Interacts with CSD1. The cofactor is Cu(2+). Expressed in roots, shoots, stems and flowers, and at lower levels in rosette and cauline leaves.

It localises to the plastid. It is found in the chloroplast. Its subcellular location is the cytoplasm. The protein resides in the cytosol. Its function is as follows. Copper chaperone for the superoxide dismutases CSD1, CSD2 and CSD3. Binds copper ions and delivers them specifically to CSDs. Is required for assistance in CSDs disulfide bond formation and thereby activation of CSDs. May be involved in the negative regulation of heat stress-responsive genes and thermotolerance. This Arabidopsis thaliana (Mouse-ear cress) protein is Copper chaperone for superoxide dismutase, chloroplastic/cytosolic (CCS).